A 232-amino-acid polypeptide reads, in one-letter code: Fibrillarin-like rRNA/tRNA 2'-O-methyltransferase (232 aa).

S-adenosyl-L-methionine-binding positions include 89–90 (TT), 108–109 (EF), 133–134 (DA), and 153–156 (DIAQ).

The protein belongs to the methyltransferase superfamily. Fibrillarin family. In terms of assembly, interacts with nop5. Component of box C/D small ribonucleoprotein (sRNP) particles that contain rpl7ae, FlpA and nop5, plus a guide RNA.

In terms of biological role, involved in pre-rRNA and tRNA processing. Utilizes the methyl donor S-adenosyl-L-methionine to catalyze the site-specific 2'-hydroxyl methylation of ribose moieties in rRNA and tRNA. Site specificity is provided by a guide RNA that base pairs with the substrate. Methylation occurs at a characteristic distance from the sequence involved in base pairing with the guide RNA. This chain is Fibrillarin-like rRNA/tRNA 2'-O-methyltransferase, found in Saccharolobus islandicus (strain M.16.27) (Sulfolobus islandicus).